The chain runs to 164 residues: Phosphopantetheine adenylyltransferase (164 aa).

Position 14 (Thr14) interacts with substrate. ATP is bound by residues 14 to 15 (TF) and His22. 3 residues coordinate substrate: Lys46, Met78, and Arg92. Residues 93-95 (GLR), Glu103, and 128-134 (HAFISST) contribute to the ATP site.

It belongs to the bacterial CoaD family. Homohexamer. Mg(2+) serves as cofactor.

The protein localises to the cytoplasm. The enzyme catalyses (R)-4'-phosphopantetheine + ATP + H(+) = 3'-dephospho-CoA + diphosphate. It functions in the pathway cofactor biosynthesis; coenzyme A biosynthesis; CoA from (R)-pantothenate: step 4/5. Functionally, reversibly transfers an adenylyl group from ATP to 4'-phosphopantetheine, yielding dephospho-CoA (dPCoA) and pyrophosphate. This is Phosphopantetheine adenylyltransferase from Vibrio vulnificus (strain CMCP6).